The sequence spans 1330 residues: G2/mitotic-specific cyclin-B3 (1330 aa).

Positions 1 to 50 (MPLPLPSRSSKPETKKSRSSKIVPSGNNGQSEKRGENYQEKISSSSPRRL) are disordered. Residues 20–30 (SKIVPSGNNGQ) show a composition bias toward polar residues. The D-box signature appears at 54-62 (RSAFEDLTN). Residues 1002–1059 (VETSSRVPSTPPESRAGMSSVGKLSTTSKSSVCESSSNKPSSSWGESSQKEMTPLEDI) are disordered. The segment covering 1026–1048 (STTSKSSVCESSSNKPSSSWGES) has biased composition (low complexity).

The protein belongs to the cyclin family. Cyclin AB subfamily. Interacts with CDK2 kinase. Post-translationally, ubiquitinated. Ubiquitination leads to its degradation during anaphase entry, after degradation of CCNB1.

The protein resides in the nucleus. Functionally, cyclins are positive regulatory subunits of the cyclin-dependent kinases (CDKs), and thereby play an essential role in the control of the cell cycle, notably via their destruction during cell division. Its tissue specificity suggest that it may be required during early meiotic prophase I. The protein is G2/mitotic-specific cyclin-B3 (CCNB3) of Canis lupus familiaris (Dog).